The following is a 310-amino-acid chain: 3,5-dioxohexanoate:acetyl-CoA acetone transferase (310 aa).

Zn(2+) is bound by residues His49, His51, and Glu258.

It belongs to the BKACE family. The cofactor is Zn(2+).

It carries out the reaction 3,5-dioxohexanoate + acetyl-CoA = acetoacetyl-CoA + acetoacetate. Its function is as follows. Catalyzes the condensation of 3,5-dioxohexanoate and acetyl-CoA, forming acetoacetate and acetoacetyl-CoA. May be involved in fatty acid biosynthesis rescue via triacetic acid lactone. This chain is 3,5-dioxohexanoate:acetyl-CoA acetone transferase, found in Paraburkholderia graminis (strain ATCC 700544 / DSM 17151 / LMG 18924 / NCIMB 13744 / C4D1M).